We begin with the raw amino-acid sequence, 328 residues long: 4-hydroxythreonine-4-phosphate dehydrogenase (328 aa).

Substrate is bound by residues H134 and T135. A divalent metal cation-binding residues include H164, H209, and H265. Substrate is bound by residues K273, N282, and R291.

It belongs to the PdxA family. As to quaternary structure, homodimer. The cofactor is Zn(2+). Requires Mg(2+) as cofactor. It depends on Co(2+) as a cofactor.

The protein localises to the cytoplasm. The catalysed reaction is 4-(phosphooxy)-L-threonine + NAD(+) = 3-amino-2-oxopropyl phosphate + CO2 + NADH. It participates in cofactor biosynthesis; pyridoxine 5'-phosphate biosynthesis; pyridoxine 5'-phosphate from D-erythrose 4-phosphate: step 4/5. Its function is as follows. Catalyzes the NAD(P)-dependent oxidation of 4-(phosphooxy)-L-threonine (HTP) into 2-amino-3-oxo-4-(phosphooxy)butyric acid which spontaneously decarboxylates to form 3-amino-2-oxopropyl phosphate (AHAP). The sequence is that of 4-hydroxythreonine-4-phosphate dehydrogenase from Vibrio vulnificus (strain CMCP6).